The chain runs to 256 residues: Probable hydroxyacylglutathione hydrolase SPCC13B11.03c (256 aa).

Zn(2+) contacts are provided by His-63, His-65, Asp-67, His-68, His-118, and Asp-139. Residues 148-150 (RFF), 178-180 (HEY), and 250-253 (RTLK) contribute to the substrate site. His-178 contacts Zn(2+).

The protein belongs to the metallo-beta-lactamase superfamily. Glyoxalase II family. Zn(2+) serves as cofactor.

It localises to the cytoplasm. The protein resides in the nucleus. It carries out the reaction an S-(2-hydroxyacyl)glutathione + H2O = a 2-hydroxy carboxylate + glutathione + H(+). The enzyme catalyses (R)-S-lactoylglutathione + H2O = (R)-lactate + glutathione + H(+). Its pathway is secondary metabolite metabolism; methylglyoxal degradation; (R)-lactate from methylglyoxal: step 2/2. Its function is as follows. Thiolesterase that catalyzes the hydrolysis of S-D-lactoylglutathione to form glutathione and D-lactic acid. Involved in the metabolism of methylglyoxal, a toxic compound for yeast proliferation, by converting methylglyoxal to lactate via S-D-lactoylglutathione by sequential enzyme reactions catalyzed by glyoxalase I and glyoxalase II. The polypeptide is Probable hydroxyacylglutathione hydrolase SPCC13B11.03c (Schizosaccharomyces pombe (strain 972 / ATCC 24843) (Fission yeast)).